Here is a 369-residue protein sequence, read N- to C-terminus: Small ribosomal subunit biogenesis GTPase RsgA (369 aa).

The region spanning 88–246 is the CP-type G domain; sequence RTVLERPPVA…LADTPGFNQP (159 aa). GTP contacts are provided by residues 137–140 and 188–196; these read NKQD and GPSGVGKSS. C271, C276, H278, and C284 together coordinate Zn(2+). The segment at 307-369 is disordered; it reads QNPENSRETD…DLDNLQEDWE (63 aa). Positions 359–369 are enriched in acidic residues; sequence TDLDNLQEDWE.

It belongs to the TRAFAC class YlqF/YawG GTPase family. RsgA subfamily. Monomer. Associates with 30S ribosomal subunit, binds 16S rRNA. Requires Zn(2+) as cofactor.

The protein localises to the cytoplasm. One of several proteins that assist in the late maturation steps of the functional core of the 30S ribosomal subunit. Helps release RbfA from mature subunits. May play a role in the assembly of ribosomal proteins into the subunit. Circularly permuted GTPase that catalyzes slow GTP hydrolysis, GTPase activity is stimulated by the 30S ribosomal subunit. The sequence is that of Small ribosomal subunit biogenesis GTPase RsgA from Synechocystis sp. (strain ATCC 27184 / PCC 6803 / Kazusa).